Here is a 173-residue protein sequence, read N- to C-terminus: SPbeta prophage-derived putative HNH homing endonuclease YosQ (173 aa).

Functionally, a possible homing endonuclease, it is entirely encoded within the YosP intron. The sequence is that of SPbeta prophage-derived putative HNH homing endonuclease YosQ (yosQ) from Bacillus subtilis (strain 168).